Consider the following 130-residue polypeptide: General stress protein 13 (130 aa).

The S1 motif domain maps to 8–77 (GSVYTGKVTG…EKGKISLSIR (70 aa)). A disordered region spans residues 76–109 (IRATQAAPEKKESKPRKPKAAQVSEEASTPQGFN). Residues 100 to 109 (EEASTPQGFN) are compositionally biased toward polar residues.

In terms of assembly, found in association with the 30S subunit of the ribosome.

The protein resides in the cytoplasm. The chain is General stress protein 13 (yugI) from Bacillus subtilis (strain 168).